A 187-amino-acid chain; its full sequence is UPF0301 protein YqgE (187 aa).

The protein belongs to the UPF0301 (AlgH) family.

In Salmonella heidelberg (strain SL476), this protein is UPF0301 protein YqgE.